Consider the following 590-residue polypeptide: Threonine dehydratase biosynthetic, chloroplastic (590 aa).

Residues 1-44 constitute a chloroplast transit peptide; the sequence is MLSTSTTNSSILPFRSRASSSTFIARPPANFNSIFTTSVRVFPI. Position 139 is an N6-(pyridoxal phosphate)lysine (Lys139). ACT-like domains follow at residues 416-488 and 509-580; these read ALLG…NISH and EVFV…IDQY.

The protein belongs to the serine/threonine dehydratase family. Requires pyridoxal 5'-phosphate as cofactor. As to expression, found at higher levels in flowers than in other organs.

It localises to the plastid. It is found in the chloroplast. It catalyses the reaction L-threonine = 2-oxobutanoate + NH4(+). Its pathway is amino-acid biosynthesis; L-isoleucine biosynthesis; 2-oxobutanoate from L-threonine: step 1/1. Its activity is regulated as follows. Allosterically inhibited by isoleucine. This Cicer arietinum (Chickpea) protein is Threonine dehydratase biosynthetic, chloroplastic.